The chain runs to 93 residues: Small ribosomal subunit protein uS19 (93 aa).

This sequence belongs to the universal ribosomal protein uS19 family.

Functionally, protein S19 forms a complex with S13 that binds strongly to the 16S ribosomal RNA. The sequence is that of Small ribosomal subunit protein uS19 from Caldanaerobacter subterraneus subsp. tengcongensis (strain DSM 15242 / JCM 11007 / NBRC 100824 / MB4) (Thermoanaerobacter tengcongensis).